Reading from the N-terminus, the 432-residue chain is MSKTYLTEKKFSDFALHPKVIEALEKKGFSNCTQIQALTLPITVKGHDIAGQAQTGTGKTLAFLTSTFHYLLTHPAKEGHEKNQPRALIMAPTRELAVQIYTDAQPLAQSTGVKMGLAYGGDGYDEQLKVLNNGVDIVIGTTGRLIDYVKQGHINLNAIQVVVLDEADRMYDLGFIKDIRWLFRRMPNAAERMNMLFSATLSYRVRELAFEQMNNPEYVEVEPEQKTGFSIKEELFYPSNEEKMRLLQTLIEEEWPERCIIFANTKHRCDDIWAHLAADGHRVGLLTGDVPQKKRLRILEDFTQGNIDILVATDVAARGLHIPSVTHVFNYDLPDDCEDYVHRIGRTGRAGKSGNSISLACEEYALNLPAIETYIQHAIPVSKYNSDALLTDLPEPKRRHRPRQGQPRRNNSAPRRGNNTQRNNRNKRPSHS.

Residues 9 to 37 (KKFSDFALHPKVIEALEKKGFSNCTQIQA) carry the Q motif motif. The Helicase ATP-binding domain maps to 40-219 (LPITVKGHDI…FEQMNNPEYV (180 aa)). Residue 53 to 60 (AQTGTGKT) coordinates ATP. A DEAD box motif is present at residues 165 to 168 (DEAD). The region spanning 245–390 (RLLQTLIEEE…VSKYNSDALL (146 aa)) is the Helicase C-terminal domain. Residues 393–432 (LPEPKRRHRPRQGQPRRNNSAPRRGNNTQRNNRNKRPSHS) form a disordered region. Over residues 404–423 (QGQPRRNNSAPRRGNNTQRN) the composition is skewed to low complexity.

This sequence belongs to the DEAD box helicase family. RhlB subfamily. In terms of assembly, component of the RNA degradosome, which is a multiprotein complex involved in RNA processing and mRNA degradation.

It is found in the cytoplasm. The catalysed reaction is ATP + H2O = ADP + phosphate + H(+). Its function is as follows. DEAD-box RNA helicase involved in RNA degradation. Has RNA-dependent ATPase activity and unwinds double-stranded RNA. This Proteus mirabilis (strain HI4320) protein is ATP-dependent RNA helicase RhlB.